We begin with the raw amino-acid sequence, 385 residues long: Actin-2 (385 aa).

This sequence belongs to the actin family. ARP1 subfamily.

The protein localises to the cytoplasm. The protein resides in the cytoskeleton. The sequence is that of Actin-2 from Pneumocystis carinii.